Reading from the N-terminus, the 101-residue chain is Putative pterin-4-alpha-carbinolamine dehydratase (101 aa).

Belongs to the pterin-4-alpha-carbinolamine dehydratase family.

It catalyses the reaction (4aS,6R)-4a-hydroxy-L-erythro-5,6,7,8-tetrahydrobiopterin = (6R)-L-erythro-6,7-dihydrobiopterin + H2O. This chain is Putative pterin-4-alpha-carbinolamine dehydratase, found in Rhodopseudomonas palustris (strain BisA53).